Consider the following 316-residue polypeptide: MACQCFLVGAGYVALAAVAYRLLTIFSNILGPYVLLSPIDLKKRAGASWAVVTGATDGIGKAYAFELARRGFNVLLVSRTQSKLDETKKEILEKYSSIEVRTAAFDFTNAAPSAYKDLLATLNQVEIGVLINNVGMSYEYPDVLHKVDGGIERLANITTINTLPPTLLSAGILPQMVARKAGVIVNVGSSAGANQMALWAVYSATKKYVSWLTAILRKEYEHQGITVQTIAPMMVATKMSKVKRTSFFTPDGAVFAKSALNTVGNTSDTTGYITHQLQLELMDLIPTFIRDKILTNMSVGTRAAALRKKEREAKSQ.

NADP(+) contacts are provided by residues 47-76 and aspartate 106; that span reads ASWA…NVLL. Serine 189 serves as a coordination point for substrate. Residue tyrosine 202 is the Proton acceptor of the active site. Lysine 206 lines the NADP(+) pocket.

The protein belongs to the short-chain dehydrogenases/reductases (SDR) family. 17-beta-HSD 3 subfamily. As to expression, expressed in the gut of larva and adult.

It carries out the reaction a very-long-chain (3R)-3-hydroxyacyl-CoA + NADP(+) = a very-long-chain 3-oxoacyl-CoA + NADPH + H(+). The catalysed reaction is (omega-1)-methyl-(3R)-hydroxy-fatty acyl-CoA + NADP(+) = (omega-1)-methyl-3-oxo-fatty acyl-CoA + NADPH + H(+). It catalyses the reaction a 17beta-hydroxy steroid + NADP(+) = a 17-oxo steroid + NADPH + H(+). Its pathway is lipid metabolism; fatty acid biosynthesis. In terms of biological role, required for branched-chain fatty acid synthesis (such as (omega-1)-methyl-fatty acids). Catalyzes the reduction of the 3-keto-fatty acyl-CoA intermediate that is formed in each cycle of fatty acid elongation. Very long-chain fatty acids (VLCFAs) serve as precursors for ceramide and sphingolipids. Involved in hormone production as it metabolizes 4-androstendione (androst-4-ene-3,17-dione) into testosterone and estrone into estradiol (17beta-estradiol) in vitro, but the physiological steroid substrate is unknown. This chain is Very-long-chain 3-oxooacyl-coA reductase let-767 (let-767), found in Caenorhabditis elegans.